The sequence spans 135 residues: DNA-directed RNA polymerase subunit omega (135 aa).

The protein belongs to the RNA polymerase subunit omega family. In terms of assembly, the RNAP catalytic core consists of 2 alpha, 1 beta, 1 beta' and 1 omega subunit. When a sigma factor is associated with the core the holoenzyme is formed, which can initiate transcription.

The enzyme catalyses RNA(n) + a ribonucleoside 5'-triphosphate = RNA(n+1) + diphosphate. In terms of biological role, promotes RNA polymerase assembly. Latches the N- and C-terminal regions of the beta' subunit thereby facilitating its interaction with the beta and alpha subunits. The protein is DNA-directed RNA polymerase subunit omega of Rhizobium meliloti (strain 1021) (Ensifer meliloti).